Consider the following 465-residue polypeptide: Glutamate--tRNA ligase 2 (465 aa).

A 'HIGH' region motif is present at residues 8–18; it reads PSPTGLMHLGN. Residues 249 to 253 carry the 'KMSKS' region motif; the sequence is PLSKR. Residue Lys252 participates in ATP binding.

The protein belongs to the class-I aminoacyl-tRNA synthetase family. Glutamate--tRNA ligase type 1 subfamily. As to quaternary structure, monomer.

Its subcellular location is the cytoplasm. The enzyme catalyses tRNA(Glu) + L-glutamate + ATP = L-glutamyl-tRNA(Glu) + AMP + diphosphate. Catalyzes the attachment of glutamate to tRNA(Glu) in a two-step reaction: glutamate is first activated by ATP to form Glu-AMP and then transferred to the acceptor end of tRNA(Glu). The sequence is that of Glutamate--tRNA ligase 2 from Coxiella burnetii (strain CbuK_Q154) (Coxiella burnetii (strain Q154)).